The primary structure comprises 656 residues: PAN2-PAN3 deadenylation complex subunit PAN3 (656 aa).

The segment at 15 to 44 (SFKGTQCRNIIIHGYCKFENEGCQFNHGNS) adopts a C3H1-type zinc-finger fold. Residues 71–104 (KTSSSFTPGKSPAVRSPDFSSLPAFQPGAPVNDQ) form a disordered region. The PABPC-interacting motif-2 (PAM-2) signature appears at 128 to 148 (AFAPSFNPYASESFTPSVSAG). The tract at residues 271–525 (QVFPRGSLPD…NIEDFTKLFS (255 aa)) is pseudokinase domain. ATP contacts are provided by residues Arg325, 375–382 (DYYPQSQS), and 428–429 (KK). Positions 526–564 (HKVLSVVNSLQYNSEYLEQQLSRELENARLFRLMCKLNA) form a coiled coil. The interval 565–656 (IYGRLESRID…IDSTFRALTQ (92 aa)) is knob domain.

This sequence belongs to the protein kinase superfamily. PAN3 family. Homodimer. Forms a heterotrimer with a catalytic subunit PAN2 to form the poly(A)-nuclease (PAN) deadenylation complex. Interacts (via PAM-2 motif) with poly(A)-binding protein PAB1 (via PABC domain), conferring substrate specificity of the enzyme complex.

The protein localises to the cytoplasm. Its function is as follows. Regulatory subunit of the poly(A)-nuclease (PAN) deadenylation complex, one of two cytoplasmic mRNA deadenylases involved in mRNA turnover. PAN specifically shortens poly(A) tails of RNA and the activity is stimulated by poly(A)-binding protein PAB1. PAN deadenylation is followed by rapid degradation of the shortened mRNA tails by the CCR4-NOT complex. Deadenylated mRNAs are then degraded by two alternative mechanisms, namely exosome-mediated 3'-5' exonucleolytic degradation, or deadenylation-dependent mRNA decaping and subsequent 5'-3' exonucleolytic degradation by XRN1. May also be involved in post-transcriptional maturation of mRNA poly(A) tails. PAN3 acts as a positive regulator for PAN activity, recruiting the catalytic subunit PAN2 to mRNA via its interaction with RNA and with PAB1. In Kluyveromyces lactis (strain ATCC 8585 / CBS 2359 / DSM 70799 / NBRC 1267 / NRRL Y-1140 / WM37) (Yeast), this protein is PAN2-PAN3 deadenylation complex subunit PAN3.